Reading from the N-terminus, the 216-residue chain is NKG2-D type II integral membrane protein (216 aa).

The Cytoplasmic portion of the chain corresponds to 1-51; sequence MGWIRGRRSRHSWEMSEFHNYNLDLKKSDFSTRWQKQRCPVVKSKCRENAS. Residues 52–72 traverse the membrane as a helical; Signal-anchor for type II membrane protein segment; it reads PFFFCCFIAVAMGIRFIIMVT. Residues 73–216 are Extracellular-facing; the sequence is IWSAVFLNSL…NTYICMQRTV (144 aa). 2 disulfide bridges follow: cysteine 96–cysteine 105 and cysteine 99–cysteine 110. Residues 98–213 form the C-type lectin domain; the sequence is PCPKNWICYK…STPNTYICMQ (116 aa). N-linked (GlcNAc...) asparagine glycans are attached at residues asparagine 115, asparagine 131, asparagine 163, and asparagine 202. 2 disulfide bridges follow: cysteine 127–cysteine 211 and cysteine 189–cysteine 203.

Homodimer; disulfide-linked. Heterohexamer composed of two subunits of KLRK1 and four subunits of HCST/DAP10. Interacts (via transmembrane domain) with HCST/DAP10 (via transmembrane domain); the interaction is required for KLRK1 NK cell surface and induces NK cell-mediated cytotoxicity. Can form disulfide-bonded heterodimer with CD94. Interacts with CEACAM1; recruits PTPN6 that dephosphorylates VAV1. As to expression, natural killer cells.

It is found in the cell membrane. In terms of biological role, functions as an activating and costimulatory receptor involved in immunosurveillance upon binding to various cellular stress-inducible ligands displayed at the surface of autologous tumor cells and virus-infected cells. Provides both stimulatory and costimulatory innate immune responses on activated killer (NK) cells, leading to cytotoxic activity. Acts as a costimulatory receptor for T-cell receptor (TCR) in CD8(+) T-cell-mediated adaptive immune responses by amplifying T-cell activation. Stimulates perforin-mediated elimination of ligand-expressing tumor cells. Signaling involves calcium influx, culminating in the expression of TNF-alpha. Participates in NK cell-mediated bone marrow graft rejection. May play a regulatory role in differentiation and survival of NK cells. Binds to ligands belonging to various subfamilies of MHC class I-related glycoproteins. The polypeptide is NKG2-D type II integral membrane protein (KLRK1) (Pan troglodytes (Chimpanzee)).